We begin with the raw amino-acid sequence, 445 residues long: Transcriptional enhancer factor TEF-4 (445 aa).

2 disordered regions span residues 1 to 47 and 191 to 217; these read MGDP…VWSP and PPASDLPGYEPPPALSPLPPPAPSPPA. Over residues 25–37 the composition is skewed to gly residues; it reads EGTGGSEGVGGDG. Positions 38-114 form a DNA-binding region, TEA; the sequence is SPDAEGVWSP…QVLARRKSRE (77 aa). The interval 172–445 is transcriptional activation; it reads WNVPDVKPFS…QYHIYRLVRD (274 aa). Over residues 199–216 the composition is skewed to pro residues; it reads YEPPPALSPLPPPAPSPP.

As to quaternary structure, interacts with YAP1 and WWTR1/TAZ. Highest expression in brain. High levels also found in lung, testis and ovarian follicle cells. Lower levels in heart and spleen.

The protein localises to the nucleus. In terms of biological role, transcription factor which plays a key role in the Hippo signaling pathway, a pathway involved in organ size control and tumor suppression by restricting proliferation and promoting apoptosis. The core of this pathway is composed of a kinase cascade wherein MST1/MST2, in complex with its regulatory protein SAV1, phosphorylates and activates LATS1/2 in complex with its regulatory protein MOB1, which in turn phosphorylates and inactivates YAP1 oncoprotein and WWTR1/TAZ. Acts by mediating gene expression of YAP1 and WWTR1/TAZ, thereby regulating cell proliferation, migration and epithelial mesenchymal transition (EMT) induction. Binds to the SPH and GT-IIC 'enhansons' (5'-GTGGAATGT-3'). May be involved in the gene regulation of neural development. Binds to the M-CAT motif. The sequence is that of Transcriptional enhancer factor TEF-4 (Tead2) from Mus musculus (Mouse).